Here is a 533-residue protein sequence, read N- to C-terminus: Trigger factor (533 aa).

Residues 164-249 (GDQLIIDFTG…VKQVKVETDT (86 aa)) form the PPIase FKBP-type domain. The disordered stretch occupies residues 436–533 (EAAIEAEAEE…APAKKPAAKK (98 aa)). The span at 465–477 (AAAKKAPAKKAPA) shows a compositional bias: basic residues. Residues 481 to 490 (AAKDGDEKPA) show a composition bias toward basic and acidic residues. Composition is skewed to basic residues over residues 494-506 (APAK…KAST) and 515-533 (PAKK…AAKK).

This sequence belongs to the FKBP-type PPIase family. Tig subfamily.

Its subcellular location is the cytoplasm. The enzyme catalyses [protein]-peptidylproline (omega=180) = [protein]-peptidylproline (omega=0). Its function is as follows. Involved in protein export. Acts as a chaperone by maintaining the newly synthesized protein in an open conformation. Functions as a peptidyl-prolyl cis-trans isomerase. In Erythrobacter litoralis (strain HTCC2594), this protein is Trigger factor.